Reading from the N-terminus, the 346-residue chain is FAS-associated factor 2 (346 aa).

The residue at position 68 (Lys-68) is an N6-acetyllysine. Positions 176–251 (SERLEREERN…EEKERKLECL (76 aa)) form a coiled coil. Positions 200–262 (ASLRADQEKE…PEPSPDDPDS (63 aa)) are disordered. A compositionally biased stretch (basic and acidic residues) spans 204 to 249 (ADQEKERKKREERERKRRKEEEVQQQKLAEERRRQNLQEEKERKLE). Residues 258-340 (DDPDSVKIIF…GLSHTEVLFV (83 aa)) enclose the UBX domain.

Identified in a complex that contains SEL1L, OS9, FAF2/UBXD8, UBE2J1/UBC6E and AUP1. Interacts with YOD1. Interacts (via N-terminus) with UBQLN2 (via C-terminus). Interacts with PNPLA2 and UBAC2. Interacts with ZFAND2B; probably through VCP. Interacts with LMBR1L.

The protein localises to the cytoplasm. It localises to the lipid droplet. It is found in the endoplasmic reticulum. Its function is as follows. Plays an important role in endoplasmic reticulum-associated degradation (ERAD) that mediates ubiquitin-dependent degradation of misfolded endoplasmic reticulum proteins. By controlling the steady-state expression of the IGF1R receptor, indirectly regulates the insulin-like growth factor receptor signaling pathway. Involved in inhibition of lipid droplet degradation by binding to phospholipase PNPL2 and inhibiting its activity by promoting dissociation of PNPL2 from its endogenous activator, ABHD5 which inhibits the rate of triacylglycerol hydrolysis. Involved in stress granule disassembly: associates with ubiquitinated G3BP1 in response to heat shock, thereby promoting interaction between ubiquitinated G3BP1 and VCP, followed by G3BP1 extraction from stress granules and stress granule disassembly. The chain is FAS-associated factor 2 (Faf2) from Rattus norvegicus (Rat).